The primary structure comprises 467 residues: Probable protein phosphatase 2C 55 (467 aa).

In terms of domain architecture, PPM-type phosphatase spans 222 to 458; the sequence is SCYLPHPDKE…DDITVVVSYV (237 aa). Residues Asp-252, Gly-253, Asp-383, and Asp-449 each coordinate Mn(2+).

The protein belongs to the PP2C family. Requires Mg(2+) as cofactor. It depends on Mn(2+) as a cofactor.

The enzyme catalyses O-phospho-L-seryl-[protein] + H2O = L-seryl-[protein] + phosphate. The catalysed reaction is O-phospho-L-threonyl-[protein] + H2O = L-threonyl-[protein] + phosphate. In Arabidopsis thaliana (Mouse-ear cress), this protein is Probable protein phosphatase 2C 55.